The following is a 20-amino-acid chain: GIFTFEDESTSTVAPAKLYK.

The protein belongs to the BetVI family.

This chain is Protein PR-L1, found in Lupinus luteus (European yellow lupine).